The primary structure comprises 346 residues: Biotin synthase (346 aa).

One can recognise a Radical SAM core domain in the interval 38–256 (RQVQVSTLLS…IAVARIMMPT (219 aa)). Positions 53, 57, and 60 each coordinate [4Fe-4S] cluster. Residues cysteine 97, cysteine 128, cysteine 188, and arginine 260 each coordinate [2Fe-2S] cluster.

Belongs to the radical SAM superfamily. Biotin synthase family. As to quaternary structure, homodimer. [4Fe-4S] cluster serves as cofactor. [2Fe-2S] cluster is required as a cofactor.

It carries out the reaction (4R,5S)-dethiobiotin + (sulfur carrier)-SH + 2 reduced [2Fe-2S]-[ferredoxin] + 2 S-adenosyl-L-methionine = (sulfur carrier)-H + biotin + 2 5'-deoxyadenosine + 2 L-methionine + 2 oxidized [2Fe-2S]-[ferredoxin]. The protein operates within cofactor biosynthesis; biotin biosynthesis; biotin from 7,8-diaminononanoate: step 2/2. Its function is as follows. Catalyzes the conversion of dethiobiotin (DTB) to biotin by the insertion of a sulfur atom into dethiobiotin via a radical-based mechanism. This Shigella dysenteriae serotype 1 (strain Sd197) protein is Biotin synthase.